The primary structure comprises 337 residues: DNA-directed RNA polymerase subunit alpha (337 aa).

Residues 1–233 (MIREKVTVST…DLFIPFLHME (233 aa)) are alpha N-terminal domain (alpha-NTD). Residues 266–337 (KLALKSIFID…FAIDLPKNQF (72 aa)) form an alpha C-terminal domain (alpha-CTD) region.

The protein belongs to the RNA polymerase alpha chain family. In terms of assembly, in plastids the minimal PEP RNA polymerase catalytic core is composed of four subunits: alpha, beta, beta', and beta''. When a (nuclear-encoded) sigma factor is associated with the core the holoenzyme is formed, which can initiate transcription.

It is found in the plastid. The protein localises to the chloroplast. It catalyses the reaction RNA(n) + a ribonucleoside 5'-triphosphate = RNA(n+1) + diphosphate. Its function is as follows. DNA-dependent RNA polymerase catalyzes the transcription of DNA into RNA using the four ribonucleoside triphosphates as substrates. The sequence is that of DNA-directed RNA polymerase subunit alpha from Ipomoea purpurea (Common morning glory).